The chain runs to 209 residues: Uracil phosphoribosyltransferase (209 aa).

Residues arginine 79, arginine 104, and 131 to 139 (DPMLATGGS) contribute to the 5-phospho-alpha-D-ribose 1-diphosphate site. Residues isoleucine 194 and 199–201 (GDA) each bind uracil. Residue aspartate 200 coordinates 5-phospho-alpha-D-ribose 1-diphosphate.

This sequence belongs to the UPRTase family. The cofactor is Mg(2+).

It catalyses the reaction UMP + diphosphate = 5-phospho-alpha-D-ribose 1-diphosphate + uracil. Its pathway is pyrimidine metabolism; UMP biosynthesis via salvage pathway; UMP from uracil: step 1/1. With respect to regulation, allosterically activated by GTP. Functionally, catalyzes the conversion of uracil and 5-phospho-alpha-D-ribose 1-diphosphate (PRPP) to UMP and diphosphate. This chain is Uracil phosphoribosyltransferase, found in Geobacillus sp. (strain WCH70).